Consider the following 424-residue polypeptide: Homeobox-containing protein 1 (424 aa).

The HNF-p1 domain maps to 1–30 (MLFTIEQLELIKKLQHTGMSSDQLLKAFGE). Residues 103–199 (SQRTPMKEIT…PNKLAAFLAD (97 aa)) enclose the POU-specific atypical domain. The segment at residues 215–291 (QRRERYVFRP…NKRKELRRRS (77 aa)) is a DNA-binding region (homeobox). The disordered stretch occupies residues 291 to 345 (SAEASAASTSSASSSASSTANHDSVSVSSMSPRDEETSSRNTTPETAISPSPAVS). Over residues 293 to 310 (EASAASTSSASSSASSTA) the composition is skewed to low complexity. Composition is skewed to polar residues over residues 311-321 (NHDSVSVSSMS) and 329-345 (SRNT…PAVS).

The protein belongs to the HMBOX1 homeobox family. Expressed in both AWC neurons. Also expressed in the FLP mechanosensory neurons.

It localises to the nucleus. Its function is as follows. Transcriptional repressor which maintains cell fate asymmetry of AWC neurons in adults by repressing the expression of multiple AWC (OFF) genes, including srsx-3 in the AWC (ON) neuron. The polypeptide is Homeobox-containing protein 1 (Caenorhabditis elegans).